A 261-amino-acid chain; its full sequence is Cytochrome c oxidase subunit 3 (261 aa).

Residues 1-15 (MTHQTHAYHMVNPSP) lie on the Mitochondrial matrix side of the membrane. The chain crosses the membrane as a helical span at residues 16–34 (WPLTGALSALLMTSGLAMW). Residues 35–40 (FHFNST) are Mitochondrial intermembrane-facing. Residues 41–66 (LLLALGLLTNILTMYQWWRDIIREST) traverse the membrane as a helical segment. The Mitochondrial matrix segment spans residues 67 to 72 (FQGHHT). Residues 73–105 (SIVQKGLRYGMILFIISEVFFFSGFFWAFYHSS) traverse the membrane as a helical segment. The Mitochondrial intermembrane portion of the chain corresponds to 106 to 128 (LAPTPELGGCWPPTGIHPLNPLE). A helical transmembrane segment spans residues 129–152 (VPLLNTSVLLASGVSITWAHHSLM). Residues 153–155 (EGN) lie on the Mitochondrial matrix side of the membrane. The helical transmembrane segment at 156-183 (RKNMLQGLFITISLGVYFTLLQASEYYE) threads the bilayer. Over 184 to 190 (ASFTISD) the chain is Mitochondrial intermembrane. A helical membrane pass occupies residues 191-223 (GVYGSTFFVATGFHGLHVIIGSTFLIVCFLRQL). Topologically, residues 224 to 232 (KFHFTSSHH) are mitochondrial matrix. Residues 233-256 (FGFEAAAWYWHFVDVVWLFLYVSI) form a helical membrane-spanning segment. Residues 257–261 (YWWGS) are Mitochondrial intermembrane-facing.

It belongs to the cytochrome c oxidase subunit 3 family. As to quaternary structure, component of the cytochrome c oxidase (complex IV, CIV), a multisubunit enzyme composed of 14 subunits. The complex is composed of a catalytic core of 3 subunits MT-CO1, MT-CO2 and MT-CO3, encoded in the mitochondrial DNA, and 11 supernumerary subunits COX4I, COX5A, COX5B, COX6A, COX6B, COX6C, COX7A, COX7B, COX7C, COX8 and NDUFA4, which are encoded in the nuclear genome. The complex exists as a monomer or a dimer and forms supercomplexes (SCs) in the inner mitochondrial membrane with NADH-ubiquinone oxidoreductase (complex I, CI) and ubiquinol-cytochrome c oxidoreductase (cytochrome b-c1 complex, complex III, CIII), resulting in different assemblies (supercomplex SCI(1)III(2)IV(1) and megacomplex MCI(2)III(2)IV(2)).

It localises to the mitochondrion inner membrane. It catalyses the reaction 4 Fe(II)-[cytochrome c] + O2 + 8 H(+)(in) = 4 Fe(III)-[cytochrome c] + 2 H2O + 4 H(+)(out). Component of the cytochrome c oxidase, the last enzyme in the mitochondrial electron transport chain which drives oxidative phosphorylation. The respiratory chain contains 3 multisubunit complexes succinate dehydrogenase (complex II, CII), ubiquinol-cytochrome c oxidoreductase (cytochrome b-c1 complex, complex III, CIII) and cytochrome c oxidase (complex IV, CIV), that cooperate to transfer electrons derived from NADH and succinate to molecular oxygen, creating an electrochemical gradient over the inner membrane that drives transmembrane transport and the ATP synthase. Cytochrome c oxidase is the component of the respiratory chain that catalyzes the reduction of oxygen to water. Electrons originating from reduced cytochrome c in the intermembrane space (IMS) are transferred via the dinuclear copper A center (CU(A)) of subunit 2 and heme A of subunit 1 to the active site in subunit 1, a binuclear center (BNC) formed by heme A3 and copper B (CU(B)). The BNC reduces molecular oxygen to 2 water molecules using 4 electrons from cytochrome c in the IMS and 4 protons from the mitochondrial matrix. The sequence is that of Cytochrome c oxidase subunit 3 (MT-CO3) from Equus asinus (Donkey).